The primary structure comprises 140 residues: Nucleoside diphosphate kinase (140 aa).

Positions 11, 59, 87, 93, 104, and 114 each coordinate ATP. The active-site Pros-phosphohistidine intermediate is His117.

Belongs to the NDK family. Homotetramer. It depends on Mg(2+) as a cofactor.

It is found in the cytoplasm. It catalyses the reaction a 2'-deoxyribonucleoside 5'-diphosphate + ATP = a 2'-deoxyribonucleoside 5'-triphosphate + ADP. The catalysed reaction is a ribonucleoside 5'-diphosphate + ATP = a ribonucleoside 5'-triphosphate + ADP. Major role in the synthesis of nucleoside triphosphates other than ATP. The ATP gamma phosphate is transferred to the NDP beta phosphate via a ping-pong mechanism, using a phosphorylated active-site intermediate. The polypeptide is Nucleoside diphosphate kinase (Persephonella marina (strain DSM 14350 / EX-H1)).